Here is a 104-residue protein sequence, read N- to C-terminus: L-rhamnose mutarotase (104 aa).

Tyr-18 serves as a coordination point for substrate. His-22 serves as the catalytic Proton donor. Residues Tyr-41 and 76–77 (WW) each bind substrate.

The protein belongs to the rhamnose mutarotase family. In terms of assembly, homodimer.

It is found in the cytoplasm. The enzyme catalyses alpha-L-rhamnose = beta-L-rhamnose. The protein operates within carbohydrate metabolism; L-rhamnose metabolism. Functionally, involved in the anomeric conversion of L-rhamnose. The polypeptide is L-rhamnose mutarotase (Burkholderia orbicola (strain MC0-3)).